The following is a 558-amino-acid chain: Cyclomaltodextrinase (558 aa).

3 residues coordinate Ca(2+): N143, G168, and D170. Substrate-binding residues include H243 and R323. The Nucleophile role is filled by D325. E354 functions as the Proton donor in the catalytic mechanism. Substrate-binding positions include 420–421 (HD), D465, and R469.

Belongs to the glycosyl hydrolase 13 family. In terms of assembly, monomer. Depending on the pH of the solution, exists as a monomer, a homodimer or as an assembly of six homodimers forming a dodecamer, which is catalytically the most efficient form of the enzyme. The cofactor is Ca(2+).

The enzyme catalyses cyclomaltodextrin + H2O = linear maltodextrin. It carries out the reaction Hydrolysis of pullulan to panose (6-alpha-D-glucosylmaltose).. Hydrolysis of beta-cyclodextrin is inhibited by Cu(2+), Zn(2+) and Ag(+), and activated by Ca(2+), EGTA and EDTA. Activity is increased over twofold in the presence of 5 mM EDTA. Competitively inhibited by acarbose and methyl 6-amino-6-deoxy-alpha-D-glucopyranoside by reducing the rate of the ring opening step of the reaction. Functionally, hydrolyzes alpha-, beta- and gamma-cyclodextrins and the resulting linear maltodextrins, with the highest activity with beta-cyclodextrin (cyclomaltoheptaose). Soluble starch is hydrolyzed slowly, but it is nevertheless preferred over pullulan as a substrate. Is able to hydrolyze amylose and amylopectin, with a very strong preference for amylose, with maltose and glucose as the main products. Maltose and glucose are the main hydrolysis products of cyclomaltodextrins, maltodextrins and starch, whereas panose is the main hydrolysis product of pullulan. Acarbose is partially hydrolyzed to glucose and pseudotrisaccharide. No activity with maltose as substrate. Has transglycosylating activity with high concentrations of maltotriose, maltotetraose and starch. In Bacillus sp, this protein is Cyclomaltodextrinase.